The chain runs to 217 residues: NADPH-dependent 3-demethoxyubiquinone 3-hydroxylase, mitochondrial (217 aa).

2 consecutive repeat copies span residues 48–129 and 130–217. Positions 48–217 are 2 X approximate tandem repeats; it reads AVDQIIRVDH…SAAIYLSERF (170 aa). Fe cation is bound by residues Glu60, Glu90, His93, Glu142, Glu178, and His181. Positions 212 and 216 each coordinate NADH.

This sequence belongs to the COQ7 family. Component of a multi-subunit COQ enzyme complex. Interacts with COQ8B and COQ6. Interacts with COQ9. Fe cation serves as cofactor.

The protein resides in the mitochondrion inner membrane. It catalyses the reaction a 5-methoxy-2-methyl-3-(all-trans-polyprenyl)benzoquinone + NADH + O2 = a 3-demethylubiquinone + NAD(+) + H2O. The protein operates within cofactor biosynthesis; ubiquinone biosynthesis. Its function is as follows. Catalyzes the hydroxylation of the 5-methoxy-2-methyl-3-(all-trans-polyprenyl)benzoquinone at the C6 position and participates in the biosynthesis of ubiquinone. Catalyzes the reaction through a substrate-mediated reduction pathway, whereby NADH shuttles electrons to 5-methoxy-2-methyl-3-(all-trans-decaprenyl)benzoquinone, which then transfers the electrons to the two Fe(3+) centers. The binding of 5-methoxy-2-methyl-3-(all-trans-polyprenyl)benzoquinone (DMQn) mediates reduction of the diiron center by nicotinamide adenine dinucleotide (NADH) and initiates oxygen activation for subsequent DMQ hydroxylation. The physiological substrates are 5-methoxy-2-methyl-3-(all-trans-nonaprenyl)benzoquinone (DMQ(9)) and 5-methoxy-2-methyl-3-(all-trans-decaprenyl)benzoquinone (DMQ(10)), however in vitro the enzyme does not have any specificity concerning the length of the polyprenyl tail, and accepts tails of various lengths with similar efficiency. Also has a structural role in the COQ enzyme complex, stabilizing other COQ polypeptides. Involved in lifespan determination in a ubiquinone-independent manner. Plays a role in modulating mitochondrial stress responses, acting in the nucleus, perhaps via regulating gene expression, independent of its characterized mitochondrial function in ubiquinone biosynthesis. The protein is NADPH-dependent 3-demethoxyubiquinone 3-hydroxylase, mitochondrial of Rattus norvegicus (Rat).